We begin with the raw amino-acid sequence, 182 residues long: Endoribonuclease YbeY (182 aa).

Zn(2+) contacts are provided by histidine 120, histidine 124, and histidine 130. The interval 157–182 is disordered; sequence RGVSFAPKPTGAGAFPSAADRDDTQN.

It belongs to the endoribonuclease YbeY family. Zn(2+) is required as a cofactor.

The protein resides in the cytoplasm. Functionally, single strand-specific metallo-endoribonuclease involved in late-stage 70S ribosome quality control and in maturation of the 3' terminus of the 16S rRNA. The sequence is that of Endoribonuclease YbeY from Corynebacterium jeikeium (strain K411).